A 342-amino-acid polypeptide reads, in one-letter code: Delta(6)-protoilludene synthase 8 (342 aa).

D81 provides a ligand contact to Mg(2+). The DDXXD motif signature appears at 93–97 (RDMVD). The Mg(2+) site is built by N217, S221, and E225. Residues 217-225 (NDLVSYNRE) carry the NSE/DTE motif motif. (2E,6E)-farnesyl diphosphate is bound by residues R305 and Y306.

The protein belongs to the terpene synthase family. Mg(2+) is required as a cofactor.

The enzyme catalyses (2E,6E)-farnesyl diphosphate = Delta(6)-protoilludene + diphosphate. Functionally, terpene cyclase that catalyzes the cyclization of farnesyl diphosphate (FPP) to delta(6)-protoilludene. This chain is Delta(6)-protoilludene synthase 8, found in Postia placenta (strain ATCC 44394 / Madison 698-R) (Brown rot fungus).